The chain runs to 267 residues: Translation initiation factor 2 subunit alpha (267 aa).

The region spanning 12 to 83 is the S1 motif domain; that stretch reads GEYVIATVKE…RRKTVDVSLK (72 aa).

This sequence belongs to the eIF-2-alpha family. In terms of assembly, heterotrimer composed of an alpha, a beta and a gamma chain.

Its function is as follows. eIF-2 functions in the early steps of protein synthesis by forming a ternary complex with GTP and initiator tRNA. This is Translation initiation factor 2 subunit alpha from Staphylothermus marinus (strain ATCC 43588 / DSM 3639 / JCM 9404 / F1).